The following is a 326-amino-acid chain: Tetraacyldisaccharide 4'-kinase (326 aa).

S53–T60 serves as a coordination point for ATP.

The protein belongs to the LpxK family.

The catalysed reaction is a lipid A disaccharide + ATP = a lipid IVA + ADP + H(+). The protein operates within glycolipid biosynthesis; lipid IV(A) biosynthesis; lipid IV(A) from (3R)-3-hydroxytetradecanoyl-[acyl-carrier-protein] and UDP-N-acetyl-alpha-D-glucosamine: step 6/6. Functionally, transfers the gamma-phosphate of ATP to the 4'-position of a tetraacyldisaccharide 1-phosphate intermediate (termed DS-1-P) to form tetraacyldisaccharide 1,4'-bis-phosphate (lipid IVA). This Actinobacillus pleuropneumoniae serotype 7 (strain AP76) protein is Tetraacyldisaccharide 4'-kinase.